Here is a 518-residue protein sequence, read N- to C-terminus: MKSFSRILFLVFLLAGLRSKAAPSAPLPLGCGFPDMAHPSETSPLKGASENSKRDRLNPEFPGTPYPEPSKLPHTVSLETFPLDFTEPLNPDLRETPHPESPETPKADSLTTSISESLDMPKTNLSKMAHPESSETPTPGPTEMPHPGSPETPKPNFSKTSRPEFPETPNTDLMQTTPQESPEILQLNATEVSQAELPETSNTNPTKTPDPKSPEKHDLNSTETPNSEFLQALHPDPSKTPHPESHVTHNPSPTEISQTEFPTTYYQNATDVPRTSDPQISTSLYPETPVPFKDDATALNELSLNPKPGTPAAIQPDSPKLPTSDSPGMVELKAPQNSGPKESNVPPPSARIAGPPALPGRPSQLAPATLRAPQRHSRGEGVNTIIVVERVKETGVTLVGRPRGAAGGALCLFFAGTALLIGIFVLLWCLYRRAARQRPFAHHRLPDDGDEPVLHLDAPKDPYDLYFYAPDTWVPSHIATKQPPPTPPLPPKLPPPPRGGRPQRLEALSPATLPNNFV.

An N-terminal signal peptide occupies residues 1-19; the sequence is MKSFSRILFLVFLLAGLRS. Topologically, residues 20-409 are extracellular; sequence KAAPSAPLPL…GRPRGAAGGA (390 aa). The tract at residues 38 to 377 is disordered; the sequence is HPSETSPLKG…ATLRAPQRHS (340 aa). Basic and acidic residues predominate over residues 92–106; that stretch reads DLRETPHPESPETPK. Asparagine 124 carries an N-linked (GlcNAc...) asparagine glycan. A compositionally biased stretch (pro residues) spans 138-153; sequence TPGPTEMPHPGSPETP. The N-linked (GlcNAc...) asparagine glycan is linked to asparagine 156. Polar residues-rich tracts occupy residues 168-180 and 187-207; these read TPNTDLMQTTPQE and LNATEVSQAELPETSNTNPTK. Residues asparagine 188 and asparagine 220 are each glycosylated (N-linked (GlcNAc...) asparagine). Composition is skewed to basic and acidic residues over residues 209 to 220 and 236 to 247; these read PDPKSPEKHDLN and DPSKTPHPESHV. 2 stretches are compositionally biased toward polar residues: residues 248–270 and 276–285; these read THNPSPTEISQTEFPTTYYQNAT and SDPQISTSLY. Asparagine 268 carries an N-linked (GlcNAc...) asparagine glycan. A helical membrane pass occupies residues 410-430; sequence LCLFFAGTALLIGIFVLLWCL. Residues 431-518 lie on the Cytoplasmic side of the membrane; the sequence is YRRAARQRPF…SPATLPNNFV (88 aa). A disordered region spans residues 477–518; that stretch reads HIATKQPPPTPPLPPKLPPPPRGGRPQRLEALSPATLPNNFV. The span at 482 to 499 shows a compositional bias: pro residues; that stretch reads QPPPTPPLPPKLPPPPRG.

The protein localises to the golgi apparatus membrane. In terms of biological role, required for proper function of the olfactory system. May be involved in establishing the acuity of olfactory sensory signaling. This chain is Golgi-associated olfactory signaling regulator (GFY), found in Homo sapiens (Human).